A 105-amino-acid chain; its full sequence is Large ribosomal subunit protein bL21 (105 aa).

It belongs to the bacterial ribosomal protein bL21 family. Part of the 50S ribosomal subunit. Contacts protein L20.

Its function is as follows. This protein binds to 23S rRNA in the presence of protein L20. The protein is Large ribosomal subunit protein bL21 of Rhizobium rhizogenes (strain K84 / ATCC BAA-868) (Agrobacterium radiobacter).